A 236-amino-acid polypeptide reads, in one-letter code: Phosphatidylserine decarboxylase proenzyme (236 aa).

The active-site Schiff-base intermediate with substrate; via pyruvic acid is the Ser203. Residue Ser203 is modified to Pyruvic acid (Ser); by autocatalysis.

Belongs to the phosphatidylserine decarboxylase family. PSD-A subfamily. In terms of assembly, heterodimer of a large membrane-associated beta subunit and a small pyruvoyl-containing alpha subunit. Pyruvate serves as cofactor. In terms of processing, is synthesized initially as an inactive proenzyme. Formation of the active enzyme involves a self-maturation process in which the active site pyruvoyl group is generated from an internal serine residue via an autocatalytic post-translational modification. Two non-identical subunits are generated from the proenzyme in this reaction, and the pyruvate is formed at the N-terminus of the alpha chain, which is derived from the carboxyl end of the proenzyme. The post-translation cleavage follows an unusual pathway, termed non-hydrolytic serinolysis, in which the side chain hydroxyl group of the serine supplies its oxygen atom to form the C-terminus of the beta chain, while the remainder of the serine residue undergoes an oxidative deamination to produce ammonia and the pyruvoyl prosthetic group on the alpha chain.

Its subcellular location is the cell membrane. It carries out the reaction a 1,2-diacyl-sn-glycero-3-phospho-L-serine + H(+) = a 1,2-diacyl-sn-glycero-3-phosphoethanolamine + CO2. Its pathway is phospholipid metabolism; phosphatidylethanolamine biosynthesis; phosphatidylethanolamine from CDP-diacylglycerol: step 2/2. In terms of biological role, catalyzes the formation of phosphatidylethanolamine (PtdEtn) from phosphatidylserine (PtdSer). The sequence is that of Phosphatidylserine decarboxylase proenzyme from Saccharopolyspora erythraea (strain ATCC 11635 / DSM 40517 / JCM 4748 / NBRC 13426 / NCIMB 8594 / NRRL 2338).